We begin with the raw amino-acid sequence, 226 residues long: Leucyl/phenylalanyl-tRNA--protein transferase (226 aa).

It belongs to the L/F-transferase family.

The protein localises to the cytoplasm. It carries out the reaction N-terminal L-lysyl-[protein] + L-leucyl-tRNA(Leu) = N-terminal L-leucyl-L-lysyl-[protein] + tRNA(Leu) + H(+). The enzyme catalyses N-terminal L-arginyl-[protein] + L-leucyl-tRNA(Leu) = N-terminal L-leucyl-L-arginyl-[protein] + tRNA(Leu) + H(+). The catalysed reaction is L-phenylalanyl-tRNA(Phe) + an N-terminal L-alpha-aminoacyl-[protein] = an N-terminal L-phenylalanyl-L-alpha-aminoacyl-[protein] + tRNA(Phe). Functionally, functions in the N-end rule pathway of protein degradation where it conjugates Leu, Phe and, less efficiently, Met from aminoacyl-tRNAs to the N-termini of proteins containing an N-terminal arginine or lysine. The protein is Leucyl/phenylalanyl-tRNA--protein transferase of Azotobacter vinelandii (strain DJ / ATCC BAA-1303).